We begin with the raw amino-acid sequence, 331 residues long: 2-hydroxyacid dehydrogenase homolog (331 aa).

NAD(+) is bound by residues 154–155, 234–236, and Asp-260; these read HI and TSR. Arg-236 is an active-site residue. Glu-265 is a catalytic residue. His-297 (proton donor) is an active-site residue. 297-300 is a binding site for NAD(+); sequence HQAF.

Belongs to the D-isomer specific 2-hydroxyacid dehydrogenase family.

In Zymomonas mobilis subsp. mobilis (strain ATCC 31821 / ZM4 / CP4), this protein is 2-hydroxyacid dehydrogenase homolog (ddh).